The primary structure comprises 281 residues: Protoheme IX farnesyltransferase (281 aa).

9 helical membrane passes run 16–36 (TFLL…GADF), 38–58 (FVIA…INMW), 75–95 (VPAG…IFAI), 101–121 (FLVS…DIVV), 129–149 (KSPY…LGGW), 150–170 (VAVQ…LLWI), 202–224 (ASWA…YVLL), 228–250 (IFYL…KFAL), and 261–281 (YKLA…GVFL).

It belongs to the UbiA prenyltransferase family. Protoheme IX farnesyltransferase subfamily.

The protein resides in the cell membrane. It catalyses the reaction heme b + (2E,6E)-farnesyl diphosphate + H2O = Fe(II)-heme o + diphosphate. It participates in porphyrin-containing compound metabolism; heme O biosynthesis; heme O from protoheme: step 1/1. In terms of biological role, converts heme B (protoheme IX) to heme O by substitution of the vinyl group on carbon 2 of heme B porphyrin ring with a hydroxyethyl farnesyl side group. The polypeptide is Protoheme IX farnesyltransferase (Archaeoglobus fulgidus (strain ATCC 49558 / DSM 4304 / JCM 9628 / NBRC 100126 / VC-16)).